The following is an 804-amino-acid chain: Phenylalanine--tRNA ligase beta subunit (804 aa).

Positions 40–155 constitute a tRNA-binding domain; it reads DRGMKGVVIG…SDAPIGADAI (116 aa). The B5 domain occupies 409-484; sequence QDSVVVTVTL…RLYGYDRLPA (76 aa). Residues Asp-462, Asp-468, Glu-471, and Glu-472 each contribute to the Mg(2+) site. The FDX-ACB domain occupies 710–803; the sequence is PRFPSVVRDI…VEKQFGAVLR (94 aa).

It belongs to the phenylalanyl-tRNA synthetase beta subunit family. Type 1 subfamily. As to quaternary structure, tetramer of two alpha and two beta subunits. The cofactor is Mg(2+).

It localises to the cytoplasm. It carries out the reaction tRNA(Phe) + L-phenylalanine + ATP = L-phenylalanyl-tRNA(Phe) + AMP + diphosphate + H(+). The sequence is that of Phenylalanine--tRNA ligase beta subunit from Geobacillus kaustophilus (strain HTA426).